We begin with the raw amino-acid sequence, 226 residues long: NADH-ubiquinone oxidoreductase chain 6 (226 aa).

Helical transmembrane passes span S2–L22, I28–V48, I56–I76, Y90–T110, and I169–T189.

The protein belongs to the complex I subunit 6 family.

Its subcellular location is the mitochondrion membrane. It catalyses the reaction a ubiquinone + NADH + 5 H(+)(in) = a ubiquinol + NAD(+) + 4 H(+)(out). In terms of biological role, core subunit of the mitochondrial membrane respiratory chain NADH dehydrogenase (Complex I) that is believed to belong to the minimal assembly required for catalysis. Complex I functions in the transfer of electrons from NADH to the respiratory chain. The immediate electron acceptor for the enzyme is believed to be ubiquinone. The sequence is that of NADH-ubiquinone oxidoreductase chain 6 (nad6) from Dictyostelium discoideum (Social amoeba).